The sequence spans 75 residues: Small ribosomal subunit protein bS18 (75 aa).

It belongs to the bacterial ribosomal protein bS18 family. In terms of assembly, part of the 30S ribosomal subunit. Forms a tight heterodimer with protein bS6.

In terms of biological role, binds as a heterodimer with protein bS6 to the central domain of the 16S rRNA, where it helps stabilize the platform of the 30S subunit. In Idiomarina loihiensis (strain ATCC BAA-735 / DSM 15497 / L2-TR), this protein is Small ribosomal subunit protein bS18.